The sequence spans 230 residues: Urease accessory protein UreF (230 aa).

This sequence belongs to the UreF family. In terms of assembly, ureD, UreF and UreG form a complex that acts as a GTP-hydrolysis-dependent molecular chaperone, activating the urease apoprotein by helping to assemble the nickel containing metallocenter of UreC. The UreE protein probably delivers the nickel.

It is found in the cytoplasm. In terms of biological role, required for maturation of urease via the functional incorporation of the urease nickel metallocenter. The sequence is that of Urease accessory protein UreF from Chromohalobacter salexigens (strain ATCC BAA-138 / DSM 3043 / CIP 106854 / NCIMB 13768 / 1H11).